A 902-amino-acid chain; its full sequence is Cytosolic 10-formyltetrahydrofolate dehydrogenase (902 aa).

The hydrolase domain stretch occupies residues 1–310; the sequence is MKIAVIGQSL…LASNFFKGAA (310 aa). A Phosphoserine modification is found at Ser9. At Lys38 the chain carries N6-succinyllysine. 88–90 is a binding site for (6R)-10-formyltetrahydrofolate; it reads QFI. The active-site Proton donor is His106. Asp142 is a (6R)-10-formyltetrahydrofolate binding site. Residues 318 to 395 enclose the Carrier domain; it reads EAELVTAEAV…DFIQLLVRKL (78 aa). Ser354 carries the O-(pantetheine 4'-phosphoryl)serine modification. The segment at 417-902 is aldehyde dehydrogenase domain; that stretch reads TVRMPHQLFI…LRVKTVTFEY (486 aa). NADP(+)-binding positions include 571–573 and 597–600; these read IPW and KPAQ. Ser629 and Ser631 each carry phosphoserine. NADP(+) is bound by residues 630–635 and 650–651; these read GSLVGQ and GS. An N6-succinyllysine modification is found at Lys660. Residue Glu673 is the Proton acceptor of the active site. 673–674 is an NADP(+) binding site; sequence EL. Cys707 (proton donor) is an active-site residue. Lys757 serves as a coordination point for NADP(+). An N6-succinyllysine modification is found at Lys767. 804–806 provides a ligand contact to NADP(+); it reads ESF. Ser825 bears the Phosphoserine mark. Residue Lys882 is modified to N6-acetyllysine.

In the N-terminal section; belongs to the GART family. This sequence in the C-terminal section; belongs to the aldehyde dehydrogenase family. ALDH1L subfamily. In terms of assembly, homotetramer. Phosphopantetheinylation at Ser-354 by AASDHPPT is required for the formyltetrahydrofolate dehydrogenase activity. In terms of tissue distribution, highly expressed in liver, pancreas and kidney.

The protein resides in the cytoplasm. It is found in the cytosol. It carries out the reaction (6R)-10-formyltetrahydrofolate + NADP(+) + H2O = (6S)-5,6,7,8-tetrahydrofolate + CO2 + NADPH + H(+). Functionally, cytosolic 10-formyltetrahydrofolate dehydrogenase that catalyzes the NADP(+)-dependent conversion of 10-formyltetrahydrofolate to tetrahydrofolate and carbon dioxide. May also have an NADP(+)-dependent aldehyde dehydrogenase activity towards formaldehyde, acetaldehyde, propionaldehyde, and benzaldehyde. This chain is Cytosolic 10-formyltetrahydrofolate dehydrogenase, found in Homo sapiens (Human).